A 170-amino-acid polypeptide reads, in one-letter code: Transmembrane protein 217B (170 aa).

Residues 1-21 form the signal peptide; it reads MNVRMFSLMVGIFSVLNTTQF. At 22–58 the chain is on the lumenal side; sequence FIFDLNQKTHICYEAKFSIYVDSKSELVTWTLFHRAN. A helical membrane pass occupies residues 59–79; the sequence is ISTGLSLTTIIIGCFLFYCIH. Residues 80–85 lie on the Cytoplasmic side of the membrane; the sequence is KNIYMG. A helical membrane pass occupies residues 86 to 106; it reads LLIYAMWIITYELINFSIVLL. The Lumenal segment spans residues 107-120; the sequence is LNGIIKDHFKTLSY. A helical membrane pass occupies residues 121-141; it reads LHWIFQISHMLLHFFCLPFIV. The Cytoplasmic segment spans residues 142–170; it reads KHAYNLYKESQTVGRKRRHRLCSTIAVNS.

Its subcellular location is the membrane. This is Transmembrane protein 217B from Homo sapiens (Human).